Here is a 181-residue protein sequence, read N- to C-terminus: Regulator of G-protein signaling 5 (181 aa).

In terms of domain architecture, RGS spans 64-180 (SLDKLLQNNY…VRSEFYQEFI (117 aa)).

The protein localises to the cytoplasm. The protein resides in the membrane. Its function is as follows. Inhibits signal transduction by increasing the GTPase activity of G protein alpha subunits thereby driving them into their inactive GDP-bound form. Binds to G(i)-alpha and G(o)-alpha, but not to G(s)-alpha. The polypeptide is Regulator of G-protein signaling 5 (RGS5) (Bos taurus (Bovine)).